The sequence spans 454 residues: UDP-N-acetylmuramate--L-alanine ligase (454 aa).

112–118 is a binding site for ATP; the sequence is GTHGKTT.

Belongs to the MurCDEF family.

The protein resides in the cytoplasm. The catalysed reaction is UDP-N-acetyl-alpha-D-muramate + L-alanine + ATP = UDP-N-acetyl-alpha-D-muramoyl-L-alanine + ADP + phosphate + H(+). It functions in the pathway cell wall biogenesis; peptidoglycan biosynthesis. In terms of biological role, cell wall formation. The chain is UDP-N-acetylmuramate--L-alanine ligase from Nitratidesulfovibrio vulgaris (strain ATCC 29579 / DSM 644 / CCUG 34227 / NCIMB 8303 / VKM B-1760 / Hildenborough) (Desulfovibrio vulgaris).